A 423-amino-acid polypeptide reads, in one-letter code: MKVDVLLGLQWGDEGKGKVVDVLTPKYDVVARFQGGPNAGHTLEFEGQKYVLRSIPSGIFQGDKVNIIGNGVVLDPALFKAEAEALEASGHPLKERLHISKKAHLILPTHRILDAAYEAAKGDAKVGTTGKGIGPTYTDKVSRNGVRVGDILHNFEQKYGAAKARHEQILKSLNYEYDLTELEKAWMEGIEYLKQFHFVDSEHEVNNYLKDGKSVLCEGAQGTMLDIDFGSYPFVTSSNTVCAGACTGLGVAPNRIGEVFGIFKAYCTRVGAGPFPTELFDETGDKMCTLGHEFGSVTGRKRRCGWIDLVALKYSVMINGVTKLIMMKSDVLDTFDTIKACVAYKVDGEEIDYFPYDITEGVEPVYAELPGWKTDMTKMQSEDEFPEEFNAYLTFLEEQLGVEIKIVSVGPDRAQTIERYTEE.

GTP is bound by residues 12 to 18 (GDEGKGK) and 40 to 42 (GHT). The Proton acceptor role is filled by Asp13. Residues Asp13 and Gly40 each coordinate Mg(2+). IMP is bound by residues 13–16 (DEGK), 38–41 (NAGH), Thr129, Arg143, Gln221, Thr236, and Arg300. The active-site Proton donor is His41. 296–302 (SVTGRKR) provides a ligand contact to substrate. GTP is bound by residues Arg302 and 408-410 (SVG).

Belongs to the adenylosuccinate synthetase family. Homodimer. Requires Mg(2+) as cofactor.

It localises to the cytoplasm. The enzyme catalyses IMP + L-aspartate + GTP = N(6)-(1,2-dicarboxyethyl)-AMP + GDP + phosphate + 2 H(+). It functions in the pathway purine metabolism; AMP biosynthesis via de novo pathway; AMP from IMP: step 1/2. Its function is as follows. Plays an important role in the de novo pathway of purine nucleotide biosynthesis. Catalyzes the first committed step in the biosynthesis of AMP from IMP. The chain is Adenylosuccinate synthetase from Bacteroides thetaiotaomicron (strain ATCC 29148 / DSM 2079 / JCM 5827 / CCUG 10774 / NCTC 10582 / VPI-5482 / E50).